The primary structure comprises 282 residues: MDSSHIAVRVARRSPSPAAVSQSSYGSLGSSQDIHIRVDKEGVASESTPLLAAAQRSIKTSSSLTASVSASSTTPSNCRRNPTLHEDCFNWRSVGLLVMCASALALAAYLLWRQTQTPDFGYRLSIVGHGIWSDMELQGRGTLFDPIGVGTVIFTHTGSNECHDDCPDVLHKLERSHVGELPYNFLVAGDCQVFEAQGWHYRSQYPRDLNGIDSLVMAFVGNFSGRPPIDCQLMAAQALILESLKRRILQPIYQLFVLGSYTDALQRELRHWPHYASHQTSK.

The tract at residues Met1 to Gly29 is disordered. At Met1–Cys88 the chain is on the cytoplasmic side. The chain crosses the membrane as a helical span at residues Phe89–Leu111. Residues Trp112–Lys282 lie on the Extracellular side of the membrane. An intrachain disulfide couples Cys162 to Cys166. Asn222 is a glycosylation site (N-linked (GlcNAc...) asparagine).

The protein belongs to the N-acetylmuramoyl-L-alanine amidase 2 family. As to expression, expressed in uninduced hemocytes and mbn-2 cells.

The protein resides in the cell membrane. Peptidoglycan-recognition protein probably involved in innate immunity by binding to peptidoglycans (PGN) of bacteria and activating the immune response. The sequence is that of Peptidoglycan-recognition protein LD (PGRP-LD) from Drosophila melanogaster (Fruit fly).